The primary structure comprises 248 residues: DNA polymerase sliding clamp (248 aa).

Belongs to the PCNA family. In terms of assembly, homotrimer. The subunits circularize to form a toroid; DNA passes through its center. Replication factor C (RFC) is required to load the toroid on the DNA.

In terms of biological role, sliding clamp subunit that acts as a moving platform for DNA processing. Responsible for tethering the catalytic subunit of DNA polymerase and other proteins to DNA during high-speed replication. The protein is DNA polymerase sliding clamp of Cenarchaeum symbiosum (strain A).